A 344-amino-acid polypeptide reads, in one-letter code: Phenylalanine--tRNA ligase alpha subunit (344 aa).

Glutamate 256 contacts Mg(2+).

It belongs to the class-II aminoacyl-tRNA synthetase family. Phe-tRNA synthetase alpha subunit type 1 subfamily. In terms of assembly, tetramer of two alpha and two beta subunits. Requires Mg(2+) as cofactor.

It localises to the cytoplasm. The catalysed reaction is tRNA(Phe) + L-phenylalanine + ATP = L-phenylalanyl-tRNA(Phe) + AMP + diphosphate + H(+). The polypeptide is Phenylalanine--tRNA ligase alpha subunit (Bacillus cereus (strain G9842)).